A 43-amino-acid chain; its full sequence is Avenin-F (43 aa).

Residues 1-23 are disordered; that stretch reads TTTVQYDPSEQYQPYPEQQEPFV. Residues 10–23 show a composition bias toward low complexity; that stretch reads EQYQPYPEQQEPFV. Repeat 1 spans residues 21-26; the sequence is PFVQQQ. The interval 21-40 is 3 X 6 aa tandem repeats of P-F-V-Q-Q-Q; the sequence is PFVQQQPPFVQQQQPFVQQQ. A 2; approximate repeat occupies 27–34; sequence PPFVQQQQ. The stretch at 35–40 is repeat 3; that stretch reads PFVQQQ.

It belongs to the gliadin/glutenin family. As to quaternary structure, monomer.

The protein resides in the vacuole. Its subcellular location is the aleurone grain. Its function is as follows. Seed storage protein. Serves as a source of nitrogen, carbon, and sulfur for the young developing seedling. The chain is Avenin-F from Avena sativa (Oat).